A 411-amino-acid chain; its full sequence is MVVIEGIKYACERCIRGHRVSSCTHTQQPLIRIKPKGRPATQCLHCREARKNKALHVKCKCGSSSSKHAATCPCYSGGGCICTNKHPQVLPPNSTTTGANGCIVINKAVLDEGSQQQAQQAQQQSQSQQAQQQQQQPQPQASPILQQPQMPTPVHTTNVTTPPVATPTHSHRALSTTPSLSPQPQSPHSPESALKSVNFLGRTNSSSSLSSLHSGRNKNRIEKVRPSHNSLSAASQLANSPSSPFYAVTPPAWVDSPTLVPTGALDASYLQILNDDLSSPLLDSDVFSSLDMEPVAHSNNNHGGIPTGGSRALASTDINFDRFESTSPSSILSSWNLWGGVGGSDAPEMSVAANPSASASASSIQTPPSSNATPEWVQGQQQPCSVSPADVMLPFKRDDQESVFLTEPLYL.

Residues 1-40 (MVVIEGIKYACERCIRGHRVSSCTHTQQPLIRIKPKGRPA) constitute a DNA-binding region (copper-fist). Residues C11, C14, C23, and H25 each coordinate Zn(2+). Low complexity-rich tracts occupy residues 115–190 (QQQA…PHSP), 205–214 (SSSSLSSLHS), 227–241 (SHNS…ANSP), and 350–370 (SVAA…PPSS). 2 disordered regions span residues 115 to 241 (QQQA…ANSP) and 348 to 389 (EMSV…VSPA).

It localises to the nucleus. Functionally, transcriptional regulator involved in resistance to high copper concentration. This is Copper resistance protein CRF1 (CRF1) from Yarrowia lipolytica (strain CLIB 122 / E 150) (Yeast).